A 573-amino-acid chain; its full sequence is Flagellin B (573 aa).

Belongs to the bacterial flagellin family. As to quaternary structure, heteromer of FlaA and FlaB. A flagellar filament composed exclusively of FlaA is indistinguishable in length from that of the wild-type and shows a slight reduction in motility. The flagellar filament composed exclusively of the FlaB is severely truncated in length and greatly reduced in motility. Thus, while both flagellins are not necessary for motility, both are required for a fully active flagellar filament.

It is found in the secreted. The protein resides in the bacterial flagellum. Functionally, flagellin is the subunit protein which polymerizes to form the filaments of bacterial flagella. The polypeptide is Flagellin B (flaB) (Campylobacter coli).